Here is a 402-residue protein sequence, read N- to C-terminus: Type II NADH:quinone oxidoreductase (402 aa).

FAD-binding positions include glycine 12–alanine 16, asparagine 39–lysine 40, and valine 83. The active site involves glutamate 172. Residues aspartate 302, alanine 319–glutamine 320, and lysine 379 each bind FAD.

This sequence belongs to the NADH dehydrogenase family. FAD is required as a cofactor.

It localises to the cell membrane. It carries out the reaction a quinone + NADH + H(+) = a quinol + NAD(+). In terms of biological role, alternative, nonproton pumping NADH:quinone oxidoreductase that delivers electrons to the respiratory chain by oxidation of NADH and reduction of quinones, and contributes to the regeneration of NAD(+). This chain is Type II NADH:quinone oxidoreductase, found in Staphylococcus epidermidis (strain ATCC 35984 / DSM 28319 / BCRC 17069 / CCUG 31568 / BM 3577 / RP62A).